Here is a 359-residue protein sequence, read N- to C-terminus: Membrane-bound lytic murein transglycosylase C (359 aa).

An N-terminal signal peptide occupies residues 1–16 (MKKYLALALIAPLLIS). Cys17 carries N-palmitoyl cysteine lipidation. Residue Cys17 is the site of S-diacylglycerol cysteine attachment.

The protein belongs to the transglycosylase Slt family.

Its subcellular location is the cell outer membrane. The catalysed reaction is Exolytic cleavage of the (1-&gt;4)-beta-glycosidic linkage between N-acetylmuramic acid (MurNAc) and N-acetylglucosamine (GlcNAc) residues in peptidoglycan, from either the reducing or the non-reducing ends of the peptidoglycan chains, with concomitant formation of a 1,6-anhydrobond in the MurNAc residue.. Murein-degrading enzyme. May play a role in recycling of muropeptides during cell elongation and/or cell division. This is Membrane-bound lytic murein transglycosylase C from Shigella flexneri serotype 5b (strain 8401).